Here is a 417-residue protein sequence, read N- to C-terminus: F-box protein At3g07870 (417 aa).

In terms of domain architecture, F-box spans 22–68 (GGGLESLPEDIIADIFSRLPISSIARLMFVCRSWRSVLTQHGRLSSS).

The sequence is that of F-box protein At3g07870 from Arabidopsis thaliana (Mouse-ear cress).